Consider the following 150-residue polypeptide: 3-dehydroquinate dehydratase (150 aa).

Catalysis depends on tyrosine 26, which acts as the Proton acceptor. Positions 77, 83, and 90 each coordinate substrate. Catalysis depends on histidine 103, which acts as the Proton donor. Substrate contacts are provided by residues leucine 104–serine 105 and arginine 114.

Belongs to the type-II 3-dehydroquinase family. In terms of assembly, homododecamer.

It carries out the reaction 3-dehydroquinate = 3-dehydroshikimate + H2O. It functions in the pathway metabolic intermediate biosynthesis; chorismate biosynthesis; chorismate from D-erythrose 4-phosphate and phosphoenolpyruvate: step 3/7. Functionally, catalyzes a trans-dehydration via an enolate intermediate. This is 3-dehydroquinate dehydratase from Histophilus somni (strain 129Pt) (Haemophilus somnus).